The sequence spans 336 residues: MLGTVNTTGMQGFNKSERCPRDTRMTQLLFPVLYTVVFFTGVLLNTLALWVFIHIPSNSTFIIYLKNTLVADLIMTLMLPFKILSDSRLAPWQLRGFVCTFSSVVFYETMYVGIMMLGLIAFDRFLKIVVPFRKTFVKKTAFAKIVSISIWLLMFLISLPNMILNKEATASTVKKCASLKSPLGLLWHQVVSHTCQFIFWTVFILMLLFYTVIAKKVYDSYRKFKSRDSKHKRLEAKVFIVMAVFFVCFAPFHFVRVPYTHSQTTNKTDCRLENQLFLAKESTLFLATTNICMDPLIYIILCKKFTRKVPCMRWRTKTAASSDEHHSSQTDNITLS.

At 1-32 the chain is on the extracellular side; sequence MLGTVNTTGMQGFNKSERCPRDTRMTQLLFPV. N-linked (GlcNAc...) asparagine glycans are attached at residues Asn6 and Asn14. Residues 33 to 53 form a helical membrane-spanning segment; that stretch reads LYTVVFFTGVLLNTLALWVFI. Topologically, residues 54–60 are cytoplasmic; that stretch reads HIPSNST. Residues 61 to 81 form a helical membrane-spanning segment; that stretch reads FIIYLKNTLVADLIMTLMLPF. The Extracellular segment spans residues 82–100; it reads KILSDSRLAPWQLRGFVCT. Cys99 and Cys176 are oxidised to a cystine. The helical transmembrane segment at 101 to 121 threads the bilayer; that stretch reads FSSVVFYETMYVGIMMLGLIA. Topologically, residues 122-144 are cytoplasmic; sequence FDRFLKIVVPFRKTFVKKTAFAK. The helical transmembrane segment at 145–165 threads the bilayer; the sequence is IVSISIWLLMFLISLPNMILN. Over 166–193 the chain is Extracellular; sequence KEATASTVKKCASLKSPLGLLWHQVVSH. Residues 194–214 traverse the membrane as a helical segment; it reads TCQFIFWTVFILMLLFYTVIA. Residues 215-237 are Cytoplasmic-facing; that stretch reads KKVYDSYRKFKSRDSKHKRLEAK. A helical membrane pass occupies residues 238-258; it reads VFIVMAVFFVCFAPFHFVRVP. Over 259 to 281 the chain is Extracellular; it reads YTHSQTTNKTDCRLENQLFLAKE. N-linked (GlcNAc...) asparagine glycosylation occurs at Asn266. A helical membrane pass occupies residues 282 to 302; that stretch reads STLFLATTNICMDPLIYIILC. Over 303–336 the chain is Cytoplasmic; it reads KKFTRKVPCMRWRTKTAASSDEHHSSQTDNITLS.

The protein belongs to the G-protein coupled receptor 1 family. As to expression, highest levels in spleen, liver brain and kidney. Lower but significant level are also detected in intestine, stomach, skeletal muscle, testis, heart and lung.

Its subcellular location is the cell membrane. Its function is as follows. Receptor for ADP. Coupled to G(i)-proteins. May play a role in hematopoiesis and the immune system. The sequence is that of P2Y purinoceptor 13 (P2ry13) from Rattus norvegicus (Rat).